A 670-amino-acid chain; its full sequence is Penicillin-binding protein activator LpoA (670 aa).

The signal sequence occupies residues 1-26 (MLPSKVVHRKAVRTVPLLLAALIFAG). Residue C27 is the site of N-palmitoyl cysteine attachment. The S-diacylglycerol cysteine moiety is linked to residue C27.

It belongs to the LpoA family. Interacts with PBP1a.

It is found in the cell outer membrane. Functionally, regulator of peptidoglycan synthesis that is essential for the function of penicillin-binding protein 1A (PBP1a). This Erwinia tasmaniensis (strain DSM 17950 / CFBP 7177 / CIP 109463 / NCPPB 4357 / Et1/99) protein is Penicillin-binding protein activator LpoA.